The chain runs to 349 residues: Ion-translocating oxidoreductase complex subunit D (349 aa).

3 helical membrane-spanning segments follow: residues 36–56 (CAFF…VALS), 77–99 (SAML…WMIV), and 124–144 (AMAA…TWIA). Thr185 carries the FMN phosphoryl threonine modification. 5 helical membrane passes run 212–232 (STGV…IVLL), 239–259 (WHIS…GFLL), 265–285 (ASPL…FIAT), 291–311 (ATSP…VYII), and 315–335 (GGYP…APFI).

It belongs to the NqrB/RnfD family. The complex is composed of six subunits: RnfA, RnfB, RnfC, RnfD, RnfE and RnfG. Requires FMN as cofactor.

It is found in the cell inner membrane. Its function is as follows. Part of a membrane-bound complex that couples electron transfer with translocation of ions across the membrane. The sequence is that of Ion-translocating oxidoreductase complex subunit D from Shewanella oneidensis (strain ATCC 700550 / JCM 31522 / CIP 106686 / LMG 19005 / NCIMB 14063 / MR-1).